Reading from the N-terminus, the 625-residue chain is tRNA uridine 5-carboxymethylaminomethyl modification enzyme MnmG (625 aa).

Residue 14–19 participates in FAD binding; the sequence is GAGHAG. Residue 273–287 participates in NAD(+) binding; that stretch reads GPRYCPSIEDKIVRF.

The protein belongs to the MnmG family. In terms of assembly, homodimer. Heterotetramer of two MnmE and two MnmG subunits. It depends on FAD as a cofactor.

The protein resides in the cytoplasm. Its function is as follows. NAD-binding protein involved in the addition of a carboxymethylaminomethyl (cmnm) group at the wobble position (U34) of certain tRNAs, forming tRNA-cmnm(5)s(2)U34. The protein is tRNA uridine 5-carboxymethylaminomethyl modification enzyme MnmG of Clostridium botulinum (strain Okra / Type B1).